The following is a 67-amino-acid chain: Histone H2A (67 aa).

Gln-60 bears the N5-methylglutamine mark.

Belongs to the histone H2A family. The nucleosome is a histone octamer containing two molecules each of H2A, H2B, H3 and H4 assembled in one H3-H4 heterotetramer and two H2A-H2B heterodimers. The octamer wraps approximately 147 bp of DNA.

It is found in the nucleus. The protein resides in the chromosome. In terms of biological role, core component of nucleosome. Nucleosomes wrap and compact DNA into chromatin, limiting DNA accessibility to the cellular machineries which require DNA as a template. Histones thereby play a central role in transcription regulation, DNA repair, DNA replication and chromosomal stability. DNA accessibility is regulated via a complex set of post-translational modifications of histones, also called histone code, and nucleosome remodeling. The sequence is that of Histone H2A from Olisthodiscus luteus (Marine phytoflagellate).